We begin with the raw amino-acid sequence, 291 residues long: 4-hydroxy-tetrahydrodipicolinate synthase (291 aa).

Residue threonine 47 participates in pyruvate binding. Tyrosine 136 serves as the catalytic Proton donor/acceptor. Lysine 164 (schiff-base intermediate with substrate) is an active-site residue. Residue isoleucine 206 participates in pyruvate binding.

It belongs to the DapA family. As to quaternary structure, homotetramer; dimer of dimers.

It is found in the cytoplasm. The enzyme catalyses L-aspartate 4-semialdehyde + pyruvate = (2S,4S)-4-hydroxy-2,3,4,5-tetrahydrodipicolinate + H2O + H(+). The protein operates within amino-acid biosynthesis; L-lysine biosynthesis via DAP pathway; (S)-tetrahydrodipicolinate from L-aspartate: step 3/4. Functionally, catalyzes the condensation of (S)-aspartate-beta-semialdehyde [(S)-ASA] and pyruvate to 4-hydroxy-tetrahydrodipicolinate (HTPA). This Leuconostoc citreum (strain KM20) protein is 4-hydroxy-tetrahydrodipicolinate synthase.